We begin with the raw amino-acid sequence, 413 residues long: Gamma-glutamyl phosphate reductase (413 aa).

It belongs to the gamma-glutamyl phosphate reductase family.

The protein resides in the cytoplasm. The catalysed reaction is L-glutamate 5-semialdehyde + phosphate + NADP(+) = L-glutamyl 5-phosphate + NADPH + H(+). The protein operates within amino-acid biosynthesis; L-proline biosynthesis; L-glutamate 5-semialdehyde from L-glutamate: step 2/2. In terms of biological role, catalyzes the NADPH-dependent reduction of L-glutamate 5-phosphate into L-glutamate 5-semialdehyde and phosphate. The product spontaneously undergoes cyclization to form 1-pyrroline-5-carboxylate. This is Gamma-glutamyl phosphate reductase from Rhodococcus jostii (strain RHA1).